A 366-amino-acid chain; its full sequence is MSGNTLGLLFSVTTFGESHGPAIGAVIDGCPPGMTLSAEDIQPDLDRRKPGTSRHVTQRKEEDLVEILSGVYEGKTTGTPICLLIRNTDQRSKDYSNIAETFRPGHADYTYWHKYGIRDPRGGGRSSARLTAPTVAAGAVAKKWLREKFGIEIHGFMSQLGDIHIPFMDWNEVPNNPFFAPNAEIVPELETYMDALRKDGDSVGARIEVVATGVPVGWGEPLFDRLDADIAHAMMGLNAVKGVEIGAGFHAVSQRGSEHGDELTPEGFVGNNAGGILGGISTGQDISVSLAIKPTSSIRTPRRSIDKAGDPAVVETFGRHDPCVGIRATPIAEALLALVLIDHALRHRAQCGDVSVETPAIPAKAS.

Positions 48 and 54 each coordinate NADP(+). FMN is bound by residues Arg125 to Ser127, Asn238 to Ala239, Gly278, Lys293 to Ser297, and Arg319.

It belongs to the chorismate synthase family. Homotetramer. FMNH2 serves as cofactor.

It catalyses the reaction 5-O-(1-carboxyvinyl)-3-phosphoshikimate = chorismate + phosphate. The protein operates within metabolic intermediate biosynthesis; chorismate biosynthesis; chorismate from D-erythrose 4-phosphate and phosphoenolpyruvate: step 7/7. Its function is as follows. Catalyzes the anti-1,4-elimination of the C-3 phosphate and the C-6 proR hydrogen from 5-enolpyruvylshikimate-3-phosphate (EPSP) to yield chorismate, which is the branch point compound that serves as the starting substrate for the three terminal pathways of aromatic amino acid biosynthesis. This reaction introduces a second double bond into the aromatic ring system. The polypeptide is Chorismate synthase (Ralstonia pickettii (strain 12J)).